Here is a 349-residue protein sequence, read N- to C-terminus: Arginine kinase (349 aa).

Positions Asp-3–Lys-85 constitute a Phosphagen kinase N-terminal domain. Residue Gly-58–Tyr-62 coordinates substrate. Positions Trp-113–Ala-349 constitute a Phosphagen kinase C-terminal domain. ATP contacts are provided by residues Ser-116–Arg-120 and His-179. Residue Glu-219 coordinates substrate. Arg-223 is a binding site for ATP. Cys-265 contributes to the substrate binding site. Residues Arg-274–His-278 and Arg-302–Glu-307 contribute to the ATP site. Glu-307 lines the substrate pocket.

This sequence belongs to the ATP:guanido phosphotransferase family.

It catalyses the reaction L-arginine + ATP = N(omega)-phospho-L-arginine + ADP + H(+). This is Arginine kinase from Liolophura japonica (Chiton).